Reading from the N-terminus, the 552-residue chain is Indole-3-pyruvate decarboxylase (552 aa).

E52 serves as a coordination point for thiamine diphosphate. Positions T385 to T466 are thiamine pyrophosphate binding. Mg(2+)-binding residues include D435 and N462.

This sequence belongs to the TPP enzyme family. In terms of assembly, homotetramer. Requires a metal cation as cofactor. Thiamine diphosphate serves as cofactor.

It catalyses the reaction indole-3-pyruvate + H(+) = indole-3-acetaldehyde + CO2. It participates in plant hormone metabolism; auxin biosynthesis. This is Indole-3-pyruvate decarboxylase (ipdC) from Enterobacter cloacae.